Here is a 334-residue protein sequence, read N- to C-terminus: Aromatic O-demethylase, reductase subunit (334 aa).

A 2Fe-2S ferredoxin-type domain is found at 1-91 (MTFAVSVGGR…DTEVRSTADA (91 aa)). 4 residues coordinate [2Fe-2S] cluster: Cys35, Cys40, Cys43, and Cys75. An FAD-binding FR-type domain is found at 98 to 198 (LRDLTATVLE…TGPLGDFHLP (101 aa)). Residues 145-148 (RQYS), 162-164 (HVR), 170-172 (VAT), Thr215, Phe330, and Ser334 each bind FAD.

As to quaternary structure, monomer. Forms a heterodimer with GcoA. It depends on FAD as a cofactor. The cofactor is [2Fe-2S] cluster.

The enzyme catalyses 2 oxidized [cytochrome P450] + NADH = 2 reduced [cytochrome P450] + NAD(+) + H(+). Its pathway is aromatic compound metabolism. Functionally, part of a two-component P450 system that efficiently O-demethylates diverse aromatic substrates such as guaiacol and a wide variety of lignin-derived monomers. Is likely involved in lignin degradation, allowing Amycolatopsis sp. ATCC 39116 to catabolize plant biomass. GcoB transfers electrons from NADH to the cytochrome P450 subunit GcoA. Highly prefers NADH over NADPH as the electron donor. The protein is Aromatic O-demethylase, reductase subunit of Amycolatopsis sp. (strain ATCC 39116 / 75iv2).